Reading from the N-terminus, the 302-residue chain is Probable 2-(5''-triphosphoribosyl)-3'-dephosphocoenzyme-A synthase 1 (302 aa).

Belongs to the CitG/MdcB family.

The enzyme catalyses 3'-dephospho-CoA + ATP = 2'-(5''-triphospho-alpha-D-ribosyl)-3'-dephospho-CoA + adenine. This is Probable 2-(5''-triphosphoribosyl)-3'-dephosphocoenzyme-A synthase 1 from Salmonella typhi.